A 189-amino-acid polypeptide reads, in one-letter code: Gluconokinase (189 aa).

ATP is bound at residue Gly-16 to Ser-23.

The protein belongs to the gluconokinase GntK/GntV family. In terms of assembly, monomer.

The catalysed reaction is D-gluconate + ATP = 6-phospho-D-gluconate + ADP + H(+). Its pathway is carbohydrate acid metabolism; D-gluconate degradation. Functionally, phosphorylates gluconate to 6-phosphogluconate. In Arabidopsis thaliana (Mouse-ear cress), this protein is Gluconokinase.